The chain runs to 251 residues: Ubiquinone/menaquinone biosynthesis C-methyltransferase UbiE (251 aa).

S-adenosyl-L-methionine-binding positions include Thr-74, Asp-95, and 123 to 124; that span reads NA.

It belongs to the class I-like SAM-binding methyltransferase superfamily. MenG/UbiE family.

It catalyses the reaction a 2-demethylmenaquinol + S-adenosyl-L-methionine = a menaquinol + S-adenosyl-L-homocysteine + H(+). The enzyme catalyses a 2-methoxy-6-(all-trans-polyprenyl)benzene-1,4-diol + S-adenosyl-L-methionine = a 5-methoxy-2-methyl-3-(all-trans-polyprenyl)benzene-1,4-diol + S-adenosyl-L-homocysteine + H(+). It participates in quinol/quinone metabolism; menaquinone biosynthesis; menaquinol from 1,4-dihydroxy-2-naphthoate: step 2/2. The protein operates within cofactor biosynthesis; ubiquinone biosynthesis. Its function is as follows. Methyltransferase required for the conversion of demethylmenaquinol (DMKH2) to menaquinol (MKH2) and the conversion of 2-polyprenyl-6-methoxy-1,4-benzoquinol (DDMQH2) to 2-polyprenyl-3-methyl-6-methoxy-1,4-benzoquinol (DMQH2). The sequence is that of Ubiquinone/menaquinone biosynthesis C-methyltransferase UbiE from Shewanella sp. (strain ANA-3).